The following is a 1028-amino-acid chain: MLLLTLRRAKGRDRGRPAGGPRRALSLPWSPAWICCWALAGCQAVWAGDSSSSGRPLPACQEKDYHFEYTECDSTGSRWRVAIPNSAVDCSGLPDPVKGKECTFSCASGEYLEMKNQVCSKCVEGTYSLGSGIKFDEWDELPAGFSNVATFMDTVVGPSDSRPDGCNNSSWLPRGNYIESNRDDCTVSLIYAVHLKKSGYVFFEYQYVDNNIFFEFFIQNDQCQEMDATTDKWVKLTDNGEWGSHSVMLKSGTNILYWRTTGILMGSKAVKPVLVKNITIEGVAYTSECFPCKPGTFSNKPGSFNCQMCPRNTYSEKGAKECIRCKEDSQFSEEGASECVDRPPCTTKDYFQIHTPCDEEGKTQIMYKWIEPKICREDLTDAIRLPPSGEKKDCPPCNPGFYNNGSSSCHPCPPGTFSDGTKECKSCPAGTEPALGFEYKWWNVLPANMKTSCFNVGNSKCDGMNGWEVAGDHIRSGAGGSDNDYLILNLHIPGFKPPTSMTGATGSELGRITFVFETLCSADCVLYFMVDINRKSTNVVESWGGTKEKQAYTHVIFKNATFTFTWAFQRTNQGQDNRRFINDVVKIYSITATNAVDGVAASCRACALGSEQSASSCVPCPPGHYIEKETNQCKECPADTYLSIHQVYGKEACIPCGPGSKSTQDHSLCYSDCFFYHEKENQTLHYDFRNLSSVGSLMNGPSFTSKGTKYFHFFNISLCGHEGRKMALCTNNISDFTVKEMVTGSDDYTNLVGAFVCQSTIIPSESKGFRAALSSQSIILADMFLGVTVDTALQNVNIKEDMFPVSPSQVPDVHFFYKSSTATTSCINGRSTAVKMRCNPMRPGAGVISVPSKCPAGTCDGCTFYFLWESAEACPLCTEHDFHEIEGACKRGLQEILYVWNEPKWCIKGISLPEKKLSTCETVDFWLKVGAGVGAFTAVLLVALTCYFWKKNQKLEYKYSKLVMTTNSKECELPAADSCAIMEGEDNEEDVVYSNKQSLLGKLKSLATKEKDDHFESVQLKSSRCPNI.

The first 47 residues, 1-47 (MLLLTLRRAKGRDRGRPAGGPRRALSLPWSPAWICCWALAGCQAVWA), serve as a signal peptide directing secretion. Topologically, residues 48–928 (GDSSSSGRPL…TCETVDFWLK (881 aa)) are extracellular. Asn168 is a glycosylation site (N-linked (GlcNAc...) asparagine). 3 disulfide bridges follow: Cys292/Cys309, Cys322/Cys345, and Cys325/Cys357. N-linked (GlcNAc...) asparagine glycans are attached at residues Asn404 and Asn690. The 206-residue stretch at 671-876 (SDCFFYHEKE…LWESAEACPL (206 aa)) folds into the MRH domain. 4 disulfides stabilise this stretch: Cys673-Cys719, Cys729-Cys757, Cys826-Cys862, and Cys838-Cys874. Residues 929–949 (VGAGVGAFTAVLLVALTCYFW) traverse the membrane as a helical segment. The Cytoplasmic portion of the chain corresponds to 950 to 1028 (KKNQKLEYKY…QLKSSRCPNI (79 aa)). A Phosphoserine modification is found at Ser1017.

Belongs to the ELAPOR family.

It is found in the cell membrane. In terms of biological role, functions as a regulator of the BMP signaling pathway and may be involved in epidermal differentiation. In Mus musculus (Mouse), this protein is Endosome/lysosome-associated apoptosis and autophagy regulator family member 2.